The following is a 368-amino-acid chain: S-adenosylmethionine decarboxylase proenzyme (368 aa).

Catalysis depends on residues glutamate 26 and glutamate 29. Serine 83 functions as the Schiff-base intermediate with substrate; via pyruvic acid in the catalytic mechanism. Serine 83 carries the post-translational modification Pyruvic acid (Ser); by autocatalysis. The active-site Proton donor; for catalytic activity is cysteine 97. Residues serine 246 and histidine 261 each act as proton acceptor; for processing activity in the active site.

The protein belongs to the eukaryotic AdoMetDC family. As to quaternary structure, heterotetramer of two alpha and two beta chains. Pyruvate serves as cofactor. Is synthesized initially as an inactive proenzyme. Formation of the active enzyme involves a self-maturation process in which the active site pyruvoyl group is generated from an internal serine residue via an autocatalytic post-translational modification. Two non-identical subunits are generated from the proenzyme in this reaction, and the pyruvate is formed at the N-terminus of the alpha chain, which is derived from the carboxyl end of the proenzyme. The post-translation cleavage follows an unusual pathway, termed non-hydrolytic serinolysis, in which the side chain hydroxyl group of the serine supplies its oxygen atom to form the C-terminus of the beta chain, while the remainder of the serine residue undergoes an oxidative deamination to produce ammonia and the pyruvoyl group blocking the N-terminus of the alpha chain.

It carries out the reaction S-adenosyl-L-methionine + H(+) = S-adenosyl 3-(methylsulfanyl)propylamine + CO2. It functions in the pathway amine and polyamine biosynthesis; S-adenosylmethioninamine biosynthesis; S-adenosylmethioninamine from S-adenosyl-L-methionine: step 1/1. Essential for biosynthesis of the polyamines spermidine and spermine. Polyamines are essential for cell proliferation and are implicated in cellular processes, ranging from DNA replication to apoptosis. The polypeptide is S-adenosylmethionine decarboxylase proenzyme (Caenorhabditis elegans).